Consider the following 397-residue polypeptide: 2-oxoglutarate and iron-dependent oxygenase domain-containing protein ICU11 (397 aa).

Residues 1–56 (MCNQTPLRSMALDSSGKQPEQQQQQQPRASSGNGEARLKLRRTPNEEHEPENYEDL) form a disordered region. Residues 18–27 (QPEQQQQQQP) show a composition bias toward low complexity. The Fe2OG dioxygenase domain occupies 238–339 (SLDSHHGYIV…RANLILWCRS (102 aa)). Fe cation is bound by residues His260, Asp262, and His320. Arg330 lines the 2-oxoglutarate pocket.

Requires Fe(2+) as cofactor. L-ascorbate serves as cofactor. Expressed in roots, cotyledons, rosette leaves, cauline leaves and inflorescences.

It is found in the nucleus. Its subcellular location is the nucleoplasm. Participates in the epigenetic repression of flowering genes in association with CP2. Functions in the repression of several members of the MADS-box transcription factors family, including SEP3, during vegetative development via histone modification. The polypeptide is 2-oxoglutarate and iron-dependent oxygenase domain-containing protein ICU11 (Arabidopsis thaliana (Mouse-ear cress)).